Here is a 112-residue protein sequence, read N- to C-terminus: MPPKNCTHLGGCDSDCLTRSEIQALFREAINTLKHTMNTENVCAHMLDIVSFERIKEYIRANLGHFTVITDKCSKRKVCLHHKRIARLLGIKKIYHQEYKRVVSKVYKKQTW.

The segment at 42–61 is dimer 1 domain; it reads VCAHMLDIVSFERIKEYIRA. Residues 72-101 are dimer 2 domain; the sequence is KCSKRKVCLHHKRIARLLGIKKIYHQEYKR.

This sequence belongs to the baculoviridae LEF-11 family. As to quaternary structure, homooligomer.

Its subcellular location is the host nucleus. Plays an essential role in viral genome replication. Involved also in late/very late gene activation. In Autographa californica nuclear polyhedrosis virus (AcMNPV), this protein is Late expression factor 11 (LEF-11).